The following is a 391-amino-acid chain: tRNA-specific 2-thiouridylase MnmA (391 aa).

ATP-binding positions include 9–16 (GMSGGVDS) and Met-35. Residues 95–97 (NPD) are interaction with target base in tRNA. Cys-100 serves as the catalytic Nucleophile. Cys-100 and Cys-196 are oxidised to a cystine. Gly-124 is an ATP binding site. Residues 146 to 148 (KDQ) are interaction with tRNA. Cys-196 acts as the Cysteine persulfide intermediate in catalysis. The interval 308–309 (RY) is interaction with tRNA.

Belongs to the MnmA/TRMU family.

The protein localises to the cytoplasm. The enzyme catalyses S-sulfanyl-L-cysteinyl-[protein] + uridine(34) in tRNA + AH2 + ATP = 2-thiouridine(34) in tRNA + L-cysteinyl-[protein] + A + AMP + diphosphate + H(+). Catalyzes the 2-thiolation of uridine at the wobble position (U34) of tRNA, leading to the formation of s(2)U34. This Burkholderia cenocepacia (strain HI2424) protein is tRNA-specific 2-thiouridylase MnmA.